The primary structure comprises 81 residues: Mipartoxin-1 (81 aa).

Residues 1 to 21 form the signal peptide; that stretch reads MKTLLLTLVVVTIVCLDLGNS. 4 disulfides stabilise this stretch: cysteine 24–cysteine 42, cysteine 35–cysteine 61, cysteine 65–cysteine 73, and cysteine 74–cysteine 79.

The protein belongs to the three-finger toxin family. Short-chain subfamily. Contains 4 disulfide bonds. Expressed by the venom gland.

It is found in the secreted. Functionally, snake venom neurotoxin that blocks neuromuscular transmission on both avian and mouse nerve-muscle preparations, presenting a postsynaptic action through the nicotinic acetylcholine receptor (nAChR). Reversibly inhibits twitches in mouse phrenic nerve diaphragm and irreversibly in chick biventer cervicis muscle. Has no cytotoxic activity towards C2C12 cells up to 180 ug/ml. This is Mipartoxin-1 from Micrurus mipartitus (Red-tailed coral snake).